Reading from the N-terminus, the 422-residue chain is MAADKPHMNLAVIGHIDHGKSTFVGRLMYDAGAVPAHVIEKYKEEAKQKGKESFAFAWVMDSLKEERERGITIDIAHKRFDTDKYYFTVVDCPGHRDFVKNMITGASQADAAVLVVAAPDGVMAQTKEHIFLSRTLGINQLIVAINKMDAVEYSEKRYKEVVEQVSGILKMIGFKPGDIPFVPTSAFYGDNVVNHSEKTPWYKGVTMMEALNNLKVPEKPSTLPLRIPVEDAYTISGIGTVPVGRVETGTMKKGDKVVFMPGGAAGEVKSIEMHHEEIPQALPGDNIGWNVRGIGKADVRRGDVCGHTDNPPKVADTFVGQIVVLQHPSAITAGYTPVFHAHTSQIACQLIELNKKLDPKSGQVKEENPTFLKAGDAAIVTIKPTKPMVIEPVKEIPQLGRFAIRDMGMTIAAGMCMSVKQK.

Residues 5–221 (KPHMNLAVIG…NNLKVPEKPS (217 aa)) form the tr-type G domain. A G1 region spans residues 14-21 (GHIDHGKS). 14–21 (GHIDHGKS) contacts GTP. A Mg(2+)-binding site is contributed by Ser21. Positions 70-74 (GITID) are G2. The tract at residues 91 to 94 (DCPG) is G3. Residues 91–95 (DCPGH) and 146–149 (NKMD) contribute to the GTP site. A G4 region spans residues 146–149 (NKMD). The tract at residues 185 to 187 (SAF) is G5.

Belongs to the TRAFAC class translation factor GTPase superfamily. Classic translation factor GTPase family. EF-Tu/EF-1A subfamily.

It localises to the cytoplasm. The enzyme catalyses GTP + H2O = GDP + phosphate + H(+). In terms of biological role, GTP hydrolase that promotes the GTP-dependent binding of aminoacyl-tRNA to the A-site of ribosomes during protein biosynthesis. In Methanosarcina barkeri (strain Fusaro / DSM 804), this protein is Elongation factor 1-alpha.